Here is a 295-residue protein sequence, read N- to C-terminus: Taste receptor type 2 member 120 (295 aa).

At 1–5 (MNLVE) the chain is on the extracellular side. Residues 6–26 (WIVTIIMMTEFLLGNCANVFI) traverse the membrane as a helical segment. Over 27-45 (TIVNFIDCVKRRKISSADR) the chain is Cytoplasmic. A helical membrane pass occupies residues 46–66 (IITAIAIFRIGLLWAMLTNWH). Residues 67–80 (SHVFTPDTDNLQMR) are Extracellular-facing. Residues 81–101 (VFGGITWAITNHFTTWLGTIL) traverse the membrane as a helical segment. Residues 102–127 (SMFYLFKIANFSNSLFLHLKRKLDNV) lie on the Cytoplasmic side of the membrane. Residues 128-148 (LLVIFLGSSLFLVAYLGMVNI) form a helical membrane-spanning segment. The Extracellular segment spans residues 149–177 (KKIAWMSIHEGNVTTKSKLKHVTSITNML). An N-linked (GlcNAc...) asparagine glycan is attached at N160. A helical transmembrane segment spans residues 178–198 (LFSLINIVPFGISLNCVLLLI). The Cytoplasmic portion of the chain corresponds to 199-228 (YSLSKHLKNMKFYGKGCQDQSTMVHIKALQ). A helical membrane pass occupies residues 229 to 249 (TVVSFLLLYATYSSCVIISGW). Topologically, residues 250-255 (SLQNAP) are extracellular. The chain crosses the membrane as a helical span at residues 256-276 (VFLFCVTIGSFYPAGHSCILI). Residues 277–295 (WGNQKLKQVFLLLLRQMRC) are Cytoplasmic-facing.

This sequence belongs to the G-protein coupled receptor T2R family.

It is found in the membrane. Putative taste receptor which may play a role in the perception of bitterness. In Mus musculus (Mouse), this protein is Taste receptor type 2 member 120.